A 1459-amino-acid polypeptide reads, in one-letter code: ARF guanine-nucleotide exchange factor 2 (1459 aa).

A phosphoserine mark is found at S46 and S284. The SEC7 domain maps to 570-714 (FNEKPKKGIP…IIMLNTDLHN (145 aa)). The tract at residues 1412 to 1459 (EKGNGSSSHGSAHEQTPESNDVEIEATAPIDDNTDDDNKPKLSDVEKD) is disordered. The span at 1447–1459 (DDNKPKLSDVEKD) shows a compositional bias: basic and acidic residues.

In terms of assembly, interacts (via SEC7 domain) with DRS2 (via C-terminus); the interaction is direct. Interacts with GMH1.

It is found in the cytoplasm. Its subcellular location is the cytosol. The protein localises to the membrane. The protein resides in the golgi apparatus membrane. Its function is as follows. Activates the ARF proteins by exchanging bound GDP for free GTP. Plays a role in maintaining mitochondrial morphology. Stimulates DRS2 flippase activity. In Saccharomyces cerevisiae (strain ATCC 204508 / S288c) (Baker's yeast), this protein is ARF guanine-nucleotide exchange factor 2 (GEA2).